Consider the following 159-residue polypeptide: Large ribosomal subunit protein uL30 (159 aa).

The protein belongs to the universal ribosomal protein uL30 family. In terms of assembly, part of the 50S ribosomal subunit.

In Ignicoccus hospitalis (strain KIN4/I / DSM 18386 / JCM 14125), this protein is Large ribosomal subunit protein uL30.